An 815-amino-acid chain; its full sequence is MRQIIDYDCNFKEEVGEVLKDISTSQNTLGFNVISILGCQSTGKSTLLNALFDTHFKVLDKLTSGYCQTTKGLWLGCGTESFNSPILIWDVEGTDSLERGEDRATFENRAALFSLAVSDCMILNIPLMNLTTYSSSNFGLLKTILNSWFSLKLDQNGITRGNIRKTTLLFAVRDITINDNDEMLGRKVVQILDLLWRQVAESQNSLGNQIPASFSDIFEVKVYGIPSLPNDYDGFKQVVAAIRYDLTTSILPKDYTRRIPLEGLEMYCKTVWKCIVDCQELNIPSQIKLVSRFRCEQAKDDILDGYKKSIKDLQKKMEKREFGFNEFSDCTLLVLENSLAAYFEVASKYDHEMSTNSSISLLVFIFHEFQNAVNSRMSLERQDLRQYTNILDYYKKGIEDHQVQYDKENNEESHYVSFDSSSWVNKELLKFDSLSLKWKTEFPSVISRQHLISPIKEKCIPDILNEISLSSQGKEVFLATYNTQEQRKLLSETLEIHSKKIYEKLVEEFFESLIKDILKEISPLLGDHFLSDPKLKLDDFWELTGSSIVNIHRLLVSKYEQQWITLFKNSNMNEFTSSGLEEEIALQLVLKFIQLIQQQSKYFHINIVDRFKNEFELDQDGVPRQWIGEDAKTMKELFIKAKNNSLQITNVFYPRKDQLIPLSGRFSNLFDKIIENSEDLSGIIALNKGHGNGKFLDSVPLISESNLKEIESKASQEITSIFSKAQLIQSTGRQPQNIPWWIYLLIIILGFDEITYVLTSPVLVTLLLLLASFIYSYLTGNFSSFCNYSQQFVIISTKILHYISGAIHSSLDNRK.

Topologically, residues 1–737 are cytoplasmic; sequence MRQIIDYDCN…IQSTGRQPQN (737 aa). The region spanning 28–260 is the GB1/RHD3-type G domain; that stretch reads TLGFNVISIL…LPKDYTRRIP (233 aa). 38-45 contacts GTP; sequence GCQSTGKS. A coiled-coil region spans residues 298-321; sequence AKDDILDGYKKSIKDLQKKMEKRE. Residues 738–758 form a helical membrane-spanning segment; that stretch reads IPWWIYLLIIILGFDEITYVL. Residues 759-761 are Lumenal-facing; that stretch reads TSP. The chain crosses the membrane as a helical span at residues 762–782; sequence VLVTLLLLLASFIYSYLTGNF. Topologically, residues 783–815 are cytoplasmic; that stretch reads SSFCNYSQQFVIISTKILHYISGAIHSSLDNRK.

The protein belongs to the TRAFAC class dynamin-like GTPase superfamily. GB1/RHD3 GTPase family. RHD3 subfamily.

It localises to the endoplasmic reticulum membrane. Its function is as follows. Probable GTP-binding protein that may be involved in cell development. The sequence is that of Protein SEY1 homolog from Cryptosporidium hominis.